Here is a 146-residue protein sequence, read N- to C-terminus: Large ribosomal subunit protein uL11 (146 aa).

Belongs to the universal ribosomal protein uL11 family. Part of the ribosomal stalk of the 50S ribosomal subunit. Interacts with L10 and the large rRNA to form the base of the stalk. L10 forms an elongated spine to which L12 dimers bind in a sequential fashion forming a multimeric L10(L12)X complex. Post-translationally, one or more lysine residues are methylated.

Functionally, forms part of the ribosomal stalk which helps the ribosome interact with GTP-bound translation factors. The protein is Large ribosomal subunit protein uL11 of Buchnera aphidicola subsp. Baizongia pistaciae (strain Bp).